A 142-amino-acid chain; its full sequence is Large ribosomal subunit protein uL11 (142 aa).

This sequence belongs to the universal ribosomal protein uL11 family. As to quaternary structure, part of the ribosomal stalk of the 50S ribosomal subunit. Interacts with L10 and the large rRNA to form the base of the stalk. L10 forms an elongated spine to which L12 dimers bind in a sequential fashion forming a multimeric L10(L12)X complex. Post-translationally, one or more lysine residues are methylated.

In terms of biological role, forms part of the ribosomal stalk which helps the ribosome interact with GTP-bound translation factors. This is Large ribosomal subunit protein uL11 from Colwellia psychrerythraea (strain 34H / ATCC BAA-681) (Vibrio psychroerythus).